The sequence spans 324 residues: Protoheme IX farnesyltransferase (324 aa).

9 consecutive transmembrane segments (helical) span residues 31 to 51 (LILL…SGQV), 56 to 76 (FLTT…INCI), 105 to 125 (VFAA…ANLL), 126 to 146 (SACL…YWLK), 153 to 173 (IVIG…AVTG), 181 to 201 (VLFA…AMMI), 214 to 234 (PVVN…LLLL), 238 to 258 (LLLV…AIVL), and 285 to 305 (FSIL…LPWT).

This sequence belongs to the UbiA prenyltransferase family. Protoheme IX farnesyltransferase subfamily.

Its subcellular location is the cell inner membrane. The enzyme catalyses heme b + (2E,6E)-farnesyl diphosphate + H2O = Fe(II)-heme o + diphosphate. It functions in the pathway porphyrin-containing compound metabolism; heme O biosynthesis; heme O from protoheme: step 1/1. In terms of biological role, converts heme B (protoheme IX) to heme O by substitution of the vinyl group on carbon 2 of heme B porphyrin ring with a hydroxyethyl farnesyl side group. The polypeptide is Protoheme IX farnesyltransferase (Acaryochloris marina (strain MBIC 11017)).